The chain runs to 423 residues: UDP-N-acetylglucosamine 1-carboxyvinyltransferase 1 (423 aa).

Phosphoenolpyruvate is bound at residue 24–25 (KN). UDP-N-acetyl-alpha-D-glucosamine is bound at residue Arg-94. The active-site Proton donor is Cys-118. 2-(S-cysteinyl)pyruvic acid O-phosphothioketal is present on Cys-118. UDP-N-acetyl-alpha-D-glucosamine is bound by residues 123-127 (RPIDQ), Asp-309, and Ile-331.

This sequence belongs to the EPSP synthase family. MurA subfamily.

The protein localises to the cytoplasm. It carries out the reaction phosphoenolpyruvate + UDP-N-acetyl-alpha-D-glucosamine = UDP-N-acetyl-3-O-(1-carboxyvinyl)-alpha-D-glucosamine + phosphate. It functions in the pathway cell wall biogenesis; peptidoglycan biosynthesis. Its function is as follows. Cell wall formation. Adds enolpyruvyl to UDP-N-acetylglucosamine. The chain is UDP-N-acetylglucosamine 1-carboxyvinyltransferase 1 from Staphylococcus haemolyticus (strain JCSC1435).